Here is a 408-residue protein sequence, read N- to C-terminus: Sex comb on midleg-like protein 4 (408 aa).

2 positions are modified to phosphoserine: serine 55 and serine 65. A disordered region spans residues 274 to 338 (AGGPATTTSG…TRRPSSRNPS (65 aa)). Over residues 278-287 (ATTTSGSRTN) the composition is skewed to polar residues. A compositionally biased stretch (low complexity) spans 288–306 (PVPSGGSSSPGLRLPASSP). The SAM domain occupies 340–406 (WTVEDVVRFV…CYHIDKLKQA (67 aa)).

The protein belongs to the SCM family.

The protein resides in the nucleus. In terms of biological role, putative Polycomb group (PcG) protein. PcG proteins act by forming multiprotein complexes, which are required to maintain the transcriptionally repressive state of homeotic genes throughout development. The protein is Sex comb on midleg-like protein 4 (Scml4) of Mus musculus (Mouse).